The chain runs to 224 residues: Casparian strip membrane protein 3 (224 aa).

Positions 1–30 (MESKKEGVASAPTSPESRRTRSNGKGKTIA) are disordered. At 1 to 57 (MESKKEGVASAPTSPESRRTRSNGKGKTIAEATPPSVTVVSTKVTPSPRGGWRKGAA) the chain is on the cytoplasmic side. Residues 58 to 78 (ILDFILRLGAISSAIGAAAVM) traverse the membrane as a helical segment. Residues 79 to 105 (GNNEQILPFFTQFFQFHVQWDDFPMFQ) are Extracellular-facing. Residues 106 to 126 (FFVFANGAAVVFLILSLPFSI) form a helical membrane-spanning segment. At 127–138 (VCIVRPFAVGPR) the chain is on the cytoplasmic side. The helical transmembrane segment at 139–159 (LLLVIVDIFAMALVIAAASAA) threads the bilayer. Residues 160-191 (AAVVYLAHNGSQDANWIAICQQYTDFCQVTSQ) lie on the Extracellular side of the membrane. N168 carries an N-linked (GlcNAc...) asparagine glycan. The chain crosses the membrane as a helical span at residues 192 to 212 (AVVASFVAAVFLICLIVLSSV). The Cytoplasmic segment spans residues 213–224 (ALKKGLKREFGW).

This sequence belongs to the Casparian strip membrane proteins (CASP) family. In terms of assembly, homodimer and heterodimers.

It localises to the cell membrane. Its function is as follows. Regulates membrane-cell wall junctions and localized cell wall deposition. Required for establishment of the Casparian strip membrane domain (CSD) and the subsequent formation of Casparian strips, a cell wall modification of the root endodermis that determines an apoplastic barrier between the intraorganismal apoplasm and the extraorganismal apoplasm and prevents lateral diffusion. The polypeptide is Casparian strip membrane protein 3 (Vigna unguiculata (Cowpea)).